The chain runs to 299 residues: Protease HtpX homolog (299 aa).

The next 2 membrane-spanning stretches (helical) occupy residues 15–35 (ILLL…GYLF) and 39–59 (GLGG…SMIF). His143 is a Zn(2+) binding site. Glu144 is an active-site residue. Zn(2+) is bound at residue His147. A run of 2 helical transmembrane segments spans residues 158-178 (IAVA…RMMW) and 198-218 (IIML…ATLV). Glu227 contacts Zn(2+).

Belongs to the peptidase M48B family. It depends on Zn(2+) as a cofactor.

The protein resides in the cell membrane. In Streptococcus pneumoniae (strain Taiwan19F-14), this protein is Protease HtpX homolog.